The following is a 152-amino-acid chain: Small ribosomal subunit protein uS15 (152 aa).

The span at 1 to 11 shows a compositional bias: basic residues; it reads MARMHARRRGK. The disordered stretch occupies residues 1 to 25; that stretch reads MARMHARRRGKSSSVRPARNEAPAW.

Belongs to the universal ribosomal protein uS15 family. Part of the 30S ribosomal subunit.

The protein is Small ribosomal subunit protein uS15 of Methanoregula boonei (strain DSM 21154 / JCM 14090 / 6A8).